The chain runs to 254 residues: Type III pantothenate kinase (254 aa).

6–13 serves as a coordination point for ATP; sequence DLGNSAIK. Residues Y99 and 106-109 each bind substrate; that span reads GVDR. D108 acts as the Proton acceptor in catalysis. Residue D128 coordinates K(+). An ATP-binding site is contributed by T131. A substrate-binding site is contributed by T182.

The protein belongs to the type III pantothenate kinase family. As to quaternary structure, homodimer. NH4(+) is required as a cofactor. It depends on K(+) as a cofactor.

It localises to the cytoplasm. The catalysed reaction is (R)-pantothenate + ATP = (R)-4'-phosphopantothenate + ADP + H(+). Its pathway is cofactor biosynthesis; coenzyme A biosynthesis; CoA from (R)-pantothenate: step 1/5. In terms of biological role, catalyzes the phosphorylation of pantothenate (Pan), the first step in CoA biosynthesis. The chain is Type III pantothenate kinase from Halorhodospira halophila (strain DSM 244 / SL1) (Ectothiorhodospira halophila (strain DSM 244 / SL1)).